Here is a 425-residue protein sequence, read N- to C-terminus: Glutamate-1-semialdehyde 2,1-aminomutase (425 aa).

Residue Lys265 is modified to N6-(pyridoxal phosphate)lysine.

It belongs to the class-III pyridoxal-phosphate-dependent aminotransferase family. HemL subfamily. In terms of assembly, homodimer. Requires pyridoxal 5'-phosphate as cofactor.

It localises to the cytoplasm. It carries out the reaction (S)-4-amino-5-oxopentanoate = 5-aminolevulinate. It functions in the pathway porphyrin-containing compound metabolism; protoporphyrin-IX biosynthesis; 5-aminolevulinate from L-glutamyl-tRNA(Glu): step 2/2. The protein is Glutamate-1-semialdehyde 2,1-aminomutase of Psychromonas ingrahamii (strain DSM 17664 / CCUG 51855 / 37).